A 587-amino-acid polypeptide reads, in one-letter code: MASEDIAKLAETLAKTQVAGGQLSFKGKSLKLNTAEDAKDVIKEIEDFDSLEALRLEGNTVGVEAARVIAKALEKKSELKRCHWSDMFTGRLRTEIPPALISLGEGLITAGAQLVELDLSDNAFGPDGVQGFEALLKSSACFTLQELKLNNCGMGIGGGKILAAALTECHRKSSAQGKPLALKVFVAGRNRLENDGATALAEAFRVIGTLEEVHMPQNGINHPGITALAQAFAVNPLLRVINLNDNTFTEKGAVAMAETLKTLRQVEVINFGDCLVRSKGAVAIADAIRGGLPKLKELNLSFCEIKRDAALAVAEAMADKAELEKLDLNGNTLGEEGCEQLQEVLEGFNMAKVLASLSDDEDEEEEEEGEEEEEEAEEEEEEDEEEEEEEEEEEEEEPQQRGQGEKSATPSRKILDPNTGEPAPVLSSPPPADVSTFLAFPSPEKLLRLGPKSSVLIAQQTDTSDPEKVVSAFLKVSSVFKDEATVRMAVQDAVDALMQKAFNSSSFNSNTFLTRLLVHMGLLKSEDKVKAIANLYGPLMALNHMVQQDYFPKALAPLLLAFVTKPNSALESCSFARHSLLQTLYKV.

Ala-2 bears the N-acetylalanine mark. Lys-8 participates in a covalent cross-link: Glycyl lysine isopeptide (Lys-Gly) (interchain with G-Cter in SUMO1); alternate. Residue Lys-8 forms a Glycyl lysine isopeptide (Lys-Gly) (interchain with G-Cter in SUMO2); alternate linkage. Residue Lys-15 forms a Glycyl lysine isopeptide (Lys-Gly) (interchain with G-Cter in SUMO2) linkage. Position 24 is a phosphoserine (Ser-24). LRR repeat units follow at residues 48-71 (FDSL…VIAK), 111-134 (GAQL…GFEA), 207-230 (IGTL…ALAQ), and 235-258 (NPLL…AMAE). Lys-279 participates in a covalent cross-link: Glycyl lysine isopeptide (Lys-Gly) (interchain with G-Cter in SUMO2). LRR repeat units lie at residues 292–319 (LPKL…AMAD) and 320–343 (KAEL…QLQE). Ser-301 carries the post-translational modification Phosphoserine. The tract at residues 357 to 430 (LSDDEDEEEE…EPAPVLSSPP (74 aa)) is disordered. At Ser-358 the chain carries Phosphoserine. Positions 358–397 (SDDEDEEEEEEGEEEEEEAEEEEEEDEEEEEEEEEEEEEE) are enriched in acidic residues. Residues 400-410 (QRGQGEKSATP) show a composition bias toward polar residues. Thr-409 bears the Phosphothreonine; by CDK2 mark. Phosphoserine is present on residues Ser-428 and Ser-435. Residue Thr-436 is modified to Phosphothreonine. Residue Ser-442 is modified to Phosphoserine. Residue Lys-452 forms a Glycyl lysine isopeptide (Lys-Gly) (interchain with G-Cter in SUMO2) linkage. Residues 523 to 526 (LKSE) carry the SUMO conjugation motif. A Glycyl lysine isopeptide (Lys-Gly) (interchain with G-Cter in SUMO1); alternate cross-link involves residue Lys-524. Residue Lys-524 forms a Glycyl lysine isopeptide (Lys-Gly) (interchain with G-Cter in SUMO2); alternate linkage. Lys-524 is modified (N6-acetyllysine; alternate). Lys-586 is covalently cross-linked (Glycyl lysine isopeptide (Lys-Gly) (interchain with G-Cter in SUMO2)).

This sequence belongs to the RNA1 family. As to quaternary structure, homodimer. Interacts with RAN. Forms a complex with RANBP2/NUP358, NXF1 and NXT1. Forms a tight complex in association with RANBP2/NUP358 and UBE2I/UBC9, the ubiquitin-conjugating enzyme E2. Interacts with UBE2I; the interaction conjugates SUMO1 to RANGAP1, and subsequently stabilizes interactions of sumoylated RANGAP1 with RANBP2/NUP358. The complex composed of RANBP2, SUMO1, RANGAP1 and UBE2I associates with nuclear pore complexes. Identified in a complex composed of RAN, RANBP2, sumoylated RANGAP1, UBE2I and XPO1. Identified in a complex composed of RAN, RANGAP1 and RANBP1. Interacts with TRAF6. Interacts with SUMO1 and SENP1. Interacts (when sumoylated) with MYCBP2; interaction inhibits MYCBP2 E3 ubiquitin-protein ligase activity and promotes MYCBP2 translocation to the nucleus. In terms of processing, phosphorylation occurs before nuclear envelope breakdown and continues throughout mitosis. Phosphorylated by the M-phase kinase cyclin B/Cdk1, in vitro. Differential timimg of dephosphorylation occurs during phases of mitosis. The phosphorylated form remains associated with RANBP2/NUP358 and the SUMO E2-conjugating enzyme, UBE2I, on nuclear pore complex (NPC) diassembly and during mitosis. Post-translationally, sumoylated. Sumoylation is necessary for targeting to the nuclear envelope (NE), and for association with mitotic spindles and kinetochores during mitosis. Also required for interaction with RANBP2 and is mediated by UBE2I. Desumoylated by HINT1. Highly expressed in brain, thymus and testis.

Its subcellular location is the cytoplasm. It is found in the nucleus. The protein resides in the nucleoplasm. The protein localises to the nucleus envelope. It localises to the chromosome. Its subcellular location is the centromere. It is found in the kinetochore. The protein resides in the cytoskeleton. The protein localises to the spindle. Its function is as follows. GTPase activator for RAN. Converts cytoplasmic GTP-bound RAN to GDP-bound RAN, which is essential for RAN-mediated nuclear import and export. Mediates dissociation of cargo from nuclear export complexes containing XPO1, RAN and RANBP2 after nuclear export. The chain is Ran GTPase-activating protein 1 (RANGAP1) from Homo sapiens (Human).